The following is a 1744-amino-acid chain: Tanabin (1744 aa).

A head region spans residues 1–12 (MEGYLASVSLGE). The interval 8–48 (VSLGEESTQMWSLNKRLEAYLSRVKALEEENELLRKEIHSL) is coil 1A. Residues 13-320 (ESTQMWSLNK…SLLEAESTRI (308 aa)) form the IF rod domain. A linker 1 region spans residues 49–60 (RSSKSERCWKKK). Positions 61–156 (HHEEMMKLRD…RDHEEEKALM (96 aa)) are coil 1B. A linker 12 region spans residues 157 to 179 (EEEIASFSQRLENFRVAPVAFKP). Residues 180–193 (VEVDDYARKLSEIW) are coil 2A. The tract at residues 194–199 (QGAVEE) is linker 2. The interval 200-314 (YKSEVSVLEA…EVATYRSLLE (115 aa)) is coil 2B. Residues 315 to 1744 (AESTRIYTDY…KKALRWKRMF (1430 aa)) form a tail region. Basic and acidic residues-rich tracts occupy residues 341-371 (RRRQSEDTRKTVSKDHRQSYSKKQIGDKNEL) and 785-815 (HSHHEETKTSESIAVEHNRMESEHAEVDKSS). Disordered regions lie at residues 341-372 (RRRQSEDTRKTVSKDHRQSYSKKQIGDKNELQ), 785-816 (HSHHEETKTSESIAVEHNRMESEHAEVDKSSE), 976-996 (EENQLSENEGNQNFGGNDIEE), 1032-1093 (SMED…QQED), 1340-1470 (DSDL…FGDV), 1485-1506 (SGLAQEPSYLGDNEESEDSMEN), and 1560-1722 (AREK…LNGH). The span at 980 to 990 (LSENEGNQNFG) shows a compositional bias: polar residues. A compositionally biased stretch (acidic residues) spans 1034–1056 (EDEEEQNNPETEDNIGLEQESDQ). Residues 1074-1086 (VVFKPEDMSDKSE) show a composition bias toward basic and acidic residues. Positions 1340–1351 (DSDLESTEEQVQ) are enriched in acidic residues. Residues 1352–1367 (ETERIPFKPEDSKMEN) show a composition bias toward basic and acidic residues. Acidic residues predominate over residues 1368–1377 (ENSESEESVD). Basic and acidic residues predominate over residues 1386–1398 (HKSEEFEISKDYQ). The segment covering 1412–1421 (LEDEFEDLTE) has biased composition (acidic residues). Basic and acidic residues predominate over residues 1423-1432 (PDVHEEHQNN). Residues 1433-1442 (DDSGASTFIT) are compositionally biased toward polar residues. Basic and acidic residues predominate over residues 1445-1460 (DEDKEREVRESVSKDE). Acidic residues predominate over residues 1496-1505 (DNEESEDSME). Composition is skewed to polar residues over residues 1576-1586 (EFTNENQSASP), 1597-1621 (EDSVISDNEGTTSSYEDLPNATSIS), and 1629-1639 (SNISTTEQSST). Residues 1680–1691 (RSEDEELDDEGS) show a composition bias toward acidic residues. The span at 1698–1709 (NDEKANGEHKDV) shows a compositional bias: basic and acidic residues.

The protein belongs to the intermediate filament family. In terms of tissue distribution, growth cones of embryonic vertebrate neurons.

In Xenopus laevis (African clawed frog), this protein is Tanabin.